Consider the following 796-residue polypeptide: Protein translocase subunit SecA 2 (796 aa).

ATP-binding positions include Gln-84, 102–106 (GEGKT), and Asp-496.

The protein belongs to the SecA family. Monomer and homodimer. Part of the essential Sec protein translocation apparatus which comprises SecA, SecYEG and auxiliary proteins SecDF. Other proteins may also be involved.

It localises to the cell membrane. It is found in the cytoplasm. The enzyme catalyses ATP + H2O + cellular proteinSide 1 = ADP + phosphate + cellular proteinSide 2.. Part of the Sec protein translocase complex. Interacts with the SecYEG preprotein conducting channel. Has a central role in coupling the hydrolysis of ATP to the transfer of proteins into and across the cell membrane, serving as an ATP-driven molecular motor driving the stepwise translocation of polypeptide chains across the membrane. In Staphylococcus epidermidis (strain ATCC 12228 / FDA PCI 1200), this protein is Protein translocase subunit SecA 2.